Reading from the N-terminus, the 276-residue chain is Octanoyltransferase LipM (276 aa).

Positions 31-246 (GKVPPTVRFY…GFASGLEVEL (216 aa)) constitute a BPL/LPL catalytic domain. Catalysis depends on cysteine 148, which acts as the Acyl-thioester intermediate.

The protein belongs to the octanoyltransferase LipM family. As to quaternary structure, monomer.

The catalysed reaction is octanoyl-[ACP] + L-lysyl-[protein] = N(6)-octanoyl-L-lysyl-[protein] + holo-[ACP] + H(+). It functions in the pathway protein modification; protein lipoylation via endogenous pathway; protein N(6)-(lipoyl)lysine from octanoyl-[acyl-carrier-protein]. In terms of biological role, catalyzes the transfer of endogenously produced octanoic acid from octanoyl-acyl-carrier-protein onto the lipoyl domain of GcvH, an intermediate carrier during protein lipoylation. This is Octanoyltransferase LipM from Brevibacillus brevis (strain 47 / JCM 6285 / NBRC 100599).